The sequence spans 366 residues: S-adenosylmethionine:tRNA ribosyltransferase-isomerase (366 aa).

This sequence belongs to the QueA family. In terms of assembly, monomer.

Its subcellular location is the cytoplasm. The catalysed reaction is 7-aminomethyl-7-carbaguanosine(34) in tRNA + S-adenosyl-L-methionine = epoxyqueuosine(34) in tRNA + adenine + L-methionine + 2 H(+). It participates in tRNA modification; tRNA-queuosine biosynthesis. Its function is as follows. Transfers and isomerizes the ribose moiety from AdoMet to the 7-aminomethyl group of 7-deazaguanine (preQ1-tRNA) to give epoxyqueuosine (oQ-tRNA). The protein is S-adenosylmethionine:tRNA ribosyltransferase-isomerase of Methylorubrum populi (strain ATCC BAA-705 / NCIMB 13946 / BJ001) (Methylobacterium populi).